A 1387-amino-acid polypeptide reads, in one-letter code: Dicer-like protein 2-1 (1387 aa).

The Helicase ATP-binding domain occupies 26–205 (MFEASLKENI…LLKIESNLDA (180 aa)). 39 to 46 (MGTGSGKT) provides a ligand contact to ATP. The DEAH box signature appears at 146-149 (DEAH). One can recognise a Helicase C-terminal domain in the interval 370–535 (KFRSLLEFLD…AYEDDERRLR (166 aa)). A Dicer dsRNA-binding fold domain is found at 565-659 (AVAHLNHFCA…LPFKRNLELK (95 aa)). RNase III domains follow at residues 915–1055 (ATRL…IDGG) and 1094–1277 (DDHL…IDSH). Positions 1133, 1263, and 1266 each coordinate Mg(2+).

This sequence belongs to the helicase family. Dicer subfamily. Mg(2+) serves as cofactor. The cofactor is Mn(2+).

Functionally, dicer-like endonuclease involved in cleaving double-stranded RNA in the RNA interference (RNAi) pathway. Produces 21 to 25 bp dsRNAs (siRNAs) which target the selective destruction of homologous RNAs leading to sequence-specific suppression of gene expression, called post-transcriptional gene silencing (PTGS). Part of a broad host defense response against viral infection and transposons. The protein is Dicer-like protein 2-1 (dcl2-1) of Aspergillus niger (strain ATCC MYA-4892 / CBS 513.88 / FGSC A1513).